A 40-amino-acid polypeptide reads, in one-letter code: Protein YneP (40 aa).

This is Protein YneP from Escherichia coli (strain K12).